Consider the following 273-residue polypeptide: Nucleotide-binding protein TT_C1664 (273 aa).

Residue 8-15 (GLSGAGKT) participates in ATP binding. 57-60 (DARA) serves as a coordination point for GTP.

The protein belongs to the RapZ-like family.

In terms of biological role, displays ATPase and GTPase activities. The polypeptide is Nucleotide-binding protein TT_C1664 (Thermus thermophilus (strain ATCC BAA-163 / DSM 7039 / HB27)).